Here is a 208-residue protein sequence, read N- to C-terminus: Ubiquinone biosynthesis protein COQ4 homolog, mitochondrial (208 aa).

Zn(2+) is bound by residues His-105, Asp-106, His-109, and Glu-122.

The protein belongs to the COQ4 family. In terms of assembly, component of a multi-subunit COQ enzyme complex. Requires Zn(2+) as cofactor.

It is found in the mitochondrion inner membrane. It carries out the reaction a 4-hydroxy-3-methoxy-5-(all-trans-polyprenyl)benzoate + H(+) = a 2-methoxy-6-(all-trans-polyprenyl)phenol + CO2. Its pathway is cofactor biosynthesis; ubiquinone biosynthesis. In terms of biological role, lyase that catalyzes the C1-decarboxylation of 4-hydroxy-3-methoxy-5-(all-trans-polyprenyl)benzoic acid into 2-methoxy-6-(all-trans-polyprenyl)phenol during ubiquinone biosynthesis. The protein is Ubiquinone biosynthesis protein COQ4 homolog, mitochondrial of Nematostella vectensis (Starlet sea anemone).